The sequence spans 417 residues: Hydrogen cyanide synthase subunit HcnC (417 aa).

The N-terminal stretch at 1–18 (MIKHYDVVIAGGGVIGAS) is a signal peptide. 7–21 (VVIAGGGVIGASCAY) is an FAD binding site. A lipid anchor (N-palmitoyl cysteine) is attached at Cys19. Cys19 carries S-diacylglycerol cysteine lipidation. The chain crosses the membrane as a helical span at residues 46-66 (SAGGLWAIGESVGLGCGVIFF).

The protein belongs to the FAD-dependent glycerol-3-phosphate dehydrogenase family. Heterotrimer of HcnA, HcnB and HcnC.

The protein resides in the cell membrane. It catalyses the reaction glycine + 2 A = hydrogen cyanide + 2 AH2 + CO2. Its function is as follows. A three-component membrane-bound flavoenzyme that catalyzes the formation of hydrogen cyanide, a secondary metabolite, by transfer of electrons to a cyanide-resistant branch of the aerobic respiratory chain. Contributes to suppression of black root rot of tobacco. The sequence is that of Hydrogen cyanide synthase subunit HcnC from Pseudomonas protegens (strain DSM 19095 / LMG 27888 / CFBP 6595 / CHA0).